The primary structure comprises 316 residues: Phosphatidylglycerol--prolipoprotein diacylglyceryl transferase (316 aa).

The next 3 membrane-spanning stretches (helical) occupy residues 18 to 38, 47 to 67, and 95 to 115; these read PIPI…AIWL, GGNP…GIIG, and NGGL…AVFF. A 1,2-diacyl-sn-glycero-3-phospho-(1'-sn-glycerol) is bound at residue arginine 141. The next 2 membrane-spanning stretches (helical) occupy residues 188-208 and 251-271; these read VHPT…LLMW and INTI…FLLK. Residues 292–316 form a disordered region; sequence AVASPDGKPLPKAGEGIDGETPSTR.

It belongs to the Lgt family.

It localises to the cell membrane. The enzyme catalyses L-cysteinyl-[prolipoprotein] + a 1,2-diacyl-sn-glycero-3-phospho-(1'-sn-glycerol) = an S-1,2-diacyl-sn-glyceryl-L-cysteinyl-[prolipoprotein] + sn-glycerol 1-phosphate + H(+). It functions in the pathway protein modification; lipoprotein biosynthesis (diacylglyceryl transfer). Its function is as follows. Catalyzes the transfer of the diacylglyceryl group from phosphatidylglycerol to the sulfhydryl group of the N-terminal cysteine of a prolipoprotein, the first step in the formation of mature lipoproteins. This Corynebacterium glutamicum (strain ATCC 13032 / DSM 20300 / JCM 1318 / BCRC 11384 / CCUG 27702 / LMG 3730 / NBRC 12168 / NCIMB 10025 / NRRL B-2784 / 534) protein is Phosphatidylglycerol--prolipoprotein diacylglyceryl transferase.